The sequence spans 76 residues: Conotoxin PnMKLT1-1111 (76 aa).

The signal sequence occupies residues Met-1–Ala-22. The propeptide occupies Val-23–Asp-50. Disulfide bonds link Cys-53–Cys-67, Cys-60–Cys-71, and Cys-66–Cys-75.

This sequence belongs to the conotoxin O1 superfamily. In terms of tissue distribution, expressed by the venom duct.

It is found in the secreted. The sequence is that of Conotoxin PnMKLT1-1111 from Conus pennaceus (Feathered cone).